Consider the following 90-residue polypeptide: Protein LURE 1.2 (90 aa).

The signal sequence occupies residues 1 to 19 (MKLPIIFLTLLIFVSSCTS). A glycan (N-linked (GlcNAc...) asparagine) is linked at asparagine 23. Intrachain disulfides connect cysteine 58-cysteine 75, cysteine 61-cysteine 82, and cysteine 65-cysteine 84. Residues 67–87 (RRGKYIRTCSFERKLCRCSIS) are PRK6 binding.

This sequence belongs to the DEFL family. In terms of assembly, interacts with MDIS1, MIK1, MIK2 and TDR/PXY, but not with MDIS2. Binds to PRK6 LRRs. Expressed in the pistil. Detected exclusively in the synergid cells.

The protein resides in the secreted. Pollen tube attractants guiding pollen tubes to the ovular micropyle. Attracts specifically pollen tubes from A.thaliana, but not those from A.lyrata. Triggers endocytosis of MDIS1 in the pollen tube tip. This chain is Protein LURE 1.2, found in Arabidopsis thaliana (Mouse-ear cress).